The sequence spans 704 residues: Elongation factor G (704 aa).

Positions 10–290 constitute a tr-type G domain; sequence NKVRNIGIMA…AVIDYLPSPL (281 aa). Residues 19–26, 83–87, and 137–140 contribute to the GTP site; these read AHIDAGKT, DTPGH, and NKMD.

It belongs to the TRAFAC class translation factor GTPase superfamily. Classic translation factor GTPase family. EF-G/EF-2 subfamily.

The protein localises to the cytoplasm. Its function is as follows. Catalyzes the GTP-dependent ribosomal translocation step during translation elongation. During this step, the ribosome changes from the pre-translocational (PRE) to the post-translocational (POST) state as the newly formed A-site-bound peptidyl-tRNA and P-site-bound deacylated tRNA move to the P and E sites, respectively. Catalyzes the coordinated movement of the two tRNA molecules, the mRNA and conformational changes in the ribosome. The polypeptide is Elongation factor G (Clavibacter michiganensis subsp. michiganensis (strain NCPPB 382)).